We begin with the raw amino-acid sequence, 870 residues long: Leucine--tRNA ligase (870 aa).

The 'HIGH' region signature appears at 42-52 (PYPSGKLHMGH). The 'KMSKS' region motif lies at 629–633 (KMSKS). Lys632 contributes to the ATP binding site.

This sequence belongs to the class-I aminoacyl-tRNA synthetase family.

The protein resides in the cytoplasm. The enzyme catalyses tRNA(Leu) + L-leucine + ATP = L-leucyl-tRNA(Leu) + AMP + diphosphate. This chain is Leucine--tRNA ligase, found in Ectopseudomonas mendocina (strain ymp) (Pseudomonas mendocina).